We begin with the raw amino-acid sequence, 635 residues long: Chaperone protein HtpG (635 aa).

The tract at residues 1–337 (MELKMHNVQE…SPDLPLNISR (337 aa)) is a; substrate-binding. Positions 338-556 (ETLQNNRVVE…EGAMDLRMER (219 aa)) are b. Residues 557–635 (FLREQKQLNY…LNNLLGKISV (79 aa)) are c.

This sequence belongs to the heat shock protein 90 family. In terms of assembly, homodimer.

The protein localises to the cytoplasm. In terms of biological role, molecular chaperone. Has ATPase activity. This Wolbachia pipientis wMel protein is Chaperone protein HtpG.